The following is a 423-amino-acid chain: Dihydroorotase (423 aa).

Zn(2+) is bound by residues histidine 60 and histidine 62. Residues 62–64 (HFR) and asparagine 94 each bind substrate. Positions 152, 179, 232, and 305 each coordinate Zn(2+). The active site involves aspartate 305. Substrate is bound by residues histidine 309 and 323–324 (PG).

Belongs to the metallo-dependent hydrolases superfamily. DHOase family. Class I DHOase subfamily. Zn(2+) serves as cofactor.

It catalyses the reaction (S)-dihydroorotate + H2O = N-carbamoyl-L-aspartate + H(+). It participates in pyrimidine metabolism; UMP biosynthesis via de novo pathway; (S)-dihydroorotate from bicarbonate: step 3/3. Its function is as follows. Catalyzes the reversible cyclization of carbamoyl aspartate to dihydroorotate. The polypeptide is Dihydroorotase (Sulfurihydrogenibium sp. (strain YO3AOP1)).